Consider the following 477-residue polypeptide: Splicing factor 3A subunit 2 (477 aa).

Position 1 is an N-acetylmethionine (Met1). The disordered stretch occupies residues 1-27 (MDFQHRPGGKTGSGGVASSSESNRDRR). Lys10 carries the N6-acetyllysine modification. The Matrin-type zinc-finger motif lies at 54 to 84 (YECKLCLTLHNNEGSYLAHTQGKKHQTNLAR). Position 153 is a phosphoserine (Ser153). Pro residues-rich tracts occupy residues 217–295 (PPAP…PVVH), 303–323 (PPAP…PVVH), and 331–362 (PPAP…PPPS). Residues 217–477 (PPAPPSLPAG…GNIPPPPPTN (261 aa)) form a disordered region. Over residues 379–398 (VHPQAPGVHPTPAVHPQAPG) the composition is skewed to low complexity. Composition is skewed to pro residues over residues 399 to 441 (VHPP…PPGV) and 448 to 477 (VHPP…PPTN).

This sequence belongs to the SF3A2 family. Component of the 17S U2 SnRNP complex, a ribonucleoprotein complex that contains small nuclear RNA (snRNA) U2 and a number of specific proteins. Part of the SF3A subcomplex of the 17S U2 SnRNP complex which is composed of three subunits; SF3A3/SAP61, SF3A2/SAP62 and SF3A1/SAP114. SF3A associates with the splicing factor SF3B and a 12S RNA unit to form the mature 17S U2 small nuclear ribonucleoprotein complex (17S U2 snRNP). Identified in the spliceosome 'E' complex, a precursor of the spliceosome 'A' complex. Identified in the spliceosome 'A' and 'B' complexes. Identified in the spliceosome 'C' complex. Interacts with HTATSF1.

The protein resides in the nucleus. Its function is as follows. Component of the 17S U2 SnRNP complex of the spliceosome, a large ribonucleoprotein complex that removes introns from transcribed pre-mRNAs. The 17S U2 SnRNP complex (1) directly participates in early spliceosome assembly and (2) mediates recognition of the intron branch site during pre-mRNA splicing by promoting the selection of the pre-mRNA branch-site adenosine, the nucleophile for the first step of splicing. Within the 17S U2 SnRNP complex, SF3A2 is part of the SF3A subcomplex that contributes to the assembly of the 17S U2 snRNP, and the subsequent assembly of the pre-spliceosome 'E' complex and the pre-catalytic spliceosome 'A' complex. Involved in pre-mRNA splicing as a component of pre-catalytic spliceosome 'B' complexes, including the Bact complex. Interacts directly with the duplex formed by U2 snRNA and the intron. This is Splicing factor 3A subunit 2 (SF3A2) from Bos taurus (Bovine).